Reading from the N-terminus, the 1706-residue chain is Bifunctional hemolysin/adenylate cyclase (1706 aa).

Residues 1–399 form an a, catalytic region; that stretch reads MQQSHQAGYA…RRPSLGAVER (399 aa). 349 to 356 is an ATP binding site; sequence AYGVAGKS. A disordered region spans residues 383–405; the sequence is VPASPGLRRPSLGAVERQDSGYD. Positions 400 to 912 are b, Ala/Gly-rich; sequence QDSGYDSLDG…LKHSIKLDVI (513 aa). Residues 500–698 form a required for interaction with CyaC region; it reads LSAAVFGLGE…SVVGAPVAVV (199 aa). N6-palmitoyl lysine attachment occurs at residues lysine 860 and lysine 983. Positions 913-1656 are c; that stretch reads GGDGDDVVLA…RDADHRVEII (744 aa). Hemolysin-type calcium-binding repeat units follow at residues 1014–1031, 1032–1049, 1050–1067, 1155–1172, 1173–1190, 1279–1296, 1297–1314, 1315–1332, 1335–1352, 1411–1428, 1429–1446, 1447–1464, 1468–1484, 1537–1554, 1555–1572, 1573–1590, and 1603–1620; these read IGGA…DNFL, AGGS…NDTL, VGGE…DDVF, WGHD…DDIL, RGGL…NDIF, MGQG…DDLL, FGGD…NDTL, YGGL…NDWF, TQAR…VDTV, TGDA…ADVL, AGGE…DDQL, SGDA…DDWF, AANA…RDTV, IGDA…NDVL, SGGA…SDLL, SGDA…DDTY, and ESGG…ADQL. The interval 1657–1706 is d, Asp/Gly-rich; it reads HAANQAVDQAGIEKLVEAMAQYPDPGAAAAAPPAARVPDTLMQSLAVNWR.

The protein in the N-terminal section; belongs to the adenylyl cyclase class-2 family. This sequence in the C-terminal section; belongs to the RTX prokaryotic toxin family. Post-translationally, released in a processed form. In terms of processing, palmitoylated at Lys-860 and Lys-983 by CyaC. The toxin only becomes active when modified in position Lys-983: palmitoylation is required for efficient membrane insertion and pore formation of the acylated Hemolysin chain.

The protein localises to the secreted. It is found in the host cell membrane. It catalyses the reaction ATP = 3',5'-cyclic AMP + diphosphate. With respect to regulation, activated by host calmodulin. Functionally, bifunctional adenylate cyclase toxin-hemolysin that plays a crucial role in host colonization. It causes whooping cough by acting on mammalian cells by elevating cAMP-concentration and thus disrupts normal cell function. In terms of biological role, adenylate cyclase that is activated by host intracellular calmodulin and catalyzes un-regulated conversion of ATP to cAMP, thereby impairing microbicidal functions of immune effector cells and inducing apoptosis of lung macrophages. Its function is as follows. Hemolysin that forms small cation-selective membrane channels, leading to hemolytic activity. The hemolytic activity of CyaA is weak compared with that of the HlyA of E.coli. The chain is Bifunctional hemolysin/adenylate cyclase (cya) from Bordetella pertussis (strain Tohama I / ATCC BAA-589 / NCTC 13251).